Here is a 255-residue protein sequence, read N- to C-terminus: MEKCEGIVIRQTSYRESDKIVRMYTREFGKIGVVARGAKKTKSRLAAVTQLFTNGYFTFFGGNGLGTLQQGEVIETFSSIQQDIFMTAYATYVCELLDKATEERQPNPYLYELTFQILRDIDEGYDPQILTQIYEMKMLPVLGLYPTMDKCAICGETTGHFDFSTSSNGIICHRCFEKDRYRMHLPENVVKLLRLFFIFQLDRLGNIDVKQETKDWLQKAIDTYYDEYSGLYLKSRKFIREMDKWENMLKKDSDD.

The protein belongs to the RecO family.

Involved in DNA repair and RecF pathway recombination. The protein is DNA repair protein RecO of Listeria monocytogenes serotype 4a (strain HCC23).